A 60-amino-acid polypeptide reads, in one-letter code: UPF0434 protein Bpro_2950 (60 aa).

It belongs to the UPF0434 family.

This Polaromonas sp. (strain JS666 / ATCC BAA-500) protein is UPF0434 protein Bpro_2950.